The chain runs to 677 residues: MLSSTDFTFASWELVVRVDHPNEEQQKDVTLRVSGDLHVGGVMLKLVEQINISQDWSDFALWWEQKHCWLLKTHWTLDKYGVQADAKLLFTPQHKMLRLRLPNLKMVRLRVSFSAVVFKAVSDICKILNIRRSEELSLLKPSGDYFKKKKKKDKNNKEPIIEDILNLESSPTASGSSVSPGLYSKTMTPIYDPINGTPASSTMTWFSDSPLTEQNCSILAFSQPPQSPEALADMYQPRSLVDKAKLNAGWLDSSRSLMEQGIQEDEQLLLRFKYYSFFDLNPKYDAVRINQLYEQARWAILLEEIDCTEEEMLIFAALQYHISKLSLSAETQDFAGESEVDEIEAALSNLEVTLEGGKADSLLEDITDIPKLADNLKLFRPKKLLPKAFKQYWFIFKDTSIAYFKNKELEQGEPLEKLNLRGCEVVPDVNVAGRKFGIKLLIPVADGMNEMYLRCDHENQYAQWMAACMLASKGKTMADSSYQPEVLNILSFLRMKNRNSASQVASSLENMDMNPECFVSPRCAKRHKSKQLAARILEAHQNVAQMPLVEAKLRFIQAWQSLPEFGLTYYLVRFKGSKKDDILGVSYNRLIKIDAATGIPVTTWRFTNIKQWNVNWETRQVVIEFDQNVFTAFTCLSADCKIVHEYIGGYIFLSTRSKDQNETLDEDLFHKLTGGQD.

Residues M96–L653 enclose the FERM domain. Phosphoserine is present on residues S170, S179, and S361. The 97-residue stretch at K377–K473 folds into the PH domain.

This sequence belongs to the kindlin family. In terms of assembly, interacts with the cytoplasmic domain of integrins ITGB1 and ITGB3. Expressed in brain, skeletal muscle, kidney, colon, adrenal gland, prostate, and placenta. Weakly or not expressed in heart, thymus, spleen, liver, small intestine, bone marrow, lung and peripheral blood leukocytes. Overexpressed in some colon and lung tumors. In skin, it is localized within the epidermis and particularly in basal keratocytes. Not detected in epidermal melanocytes and dermal fibroblasts.

It is found in the cytoplasm. It localises to the cytoskeleton. The protein localises to the cell junction. Its subcellular location is the focal adhesion. The protein resides in the cell projection. It is found in the ruffle membrane. Involved in cell adhesion. Contributes to integrin activation. When coexpressed with talin, potentiates activation of ITGA2B. Required for normal keratinocyte proliferation. Required for normal polarization of basal keratinocytes in skin, and for normal cell shape. Required for normal adhesion of keratinocytes to fibronectin and laminin, and for normal keratinocyte migration to wound sites. May mediate TGF-beta 1 signaling in tumor progression. This chain is Fermitin family homolog 1 (FERMT1), found in Homo sapiens (Human).